The following is a 379-amino-acid chain: Chaperone protein DnaJ 2 (379 aa).

A J domain is found at 4–68; it reads DYYAVLGVRR…QKKQVYDLGG (65 aa). The segment at 130 to 212 adopts a CR-type zinc-finger fold; it reads GTTKDIQVDT…CAGDGRVPSR (83 aa). Positions 143, 146, 160, 163, 186, 189, 200, and 203 each coordinate Zn(2+). CXXCXGXG motif repeat units lie at residues 143–150, 160–167, 186–193, and 200–207; these read CNTCNGEG, CDMCRGRG, CPQCQGFA, and CPECAGDG. The segment at 351–379 is disordered; the sequence is RGEERPTGQFQPGQQGLFSRLKDAFNGRS. The span at 358-367 shows a compositional bias: polar residues; the sequence is GQFQPGQQGL. Positions 370–379 are enriched in basic and acidic residues; the sequence is RLKDAFNGRS.

It belongs to the DnaJ family. As to quaternary structure, homodimer. Zn(2+) serves as cofactor.

It localises to the cytoplasm. Its function is as follows. Participates actively in the response to hyperosmotic and heat shock by preventing the aggregation of stress-denatured proteins and by disaggregating proteins, also in an autonomous, DnaK-independent fashion. Unfolded proteins bind initially to DnaJ; upon interaction with the DnaJ-bound protein, DnaK hydrolyzes its bound ATP, resulting in the formation of a stable complex. GrpE releases ADP from DnaK; ATP binding to DnaK triggers the release of the substrate protein, thus completing the reaction cycle. Several rounds of ATP-dependent interactions between DnaJ, DnaK and GrpE are required for fully efficient folding. Also involved, together with DnaK and GrpE, in the DNA replication of plasmids through activation of initiation proteins. This Streptomyces albus G protein is Chaperone protein DnaJ 2.